The primary structure comprises 501 residues: Glycogen synthase 1 (501 aa).

Lys18 is a binding site for ADP-alpha-D-glucose.

It belongs to the glycosyltransferase 1 family. Bacterial/plant glycogen synthase subfamily.

It carries out the reaction [(1-&gt;4)-alpha-D-glucosyl](n) + ADP-alpha-D-glucose = [(1-&gt;4)-alpha-D-glucosyl](n+1) + ADP + H(+). It functions in the pathway glycan biosynthesis; glycogen biosynthesis. In terms of biological role, synthesizes alpha-1,4-glucan chains using ADP-glucose. In Geobacter sulfurreducens (strain ATCC 51573 / DSM 12127 / PCA), this protein is Glycogen synthase 1.